The sequence spans 308 residues: Cytochrome b (308 aa).

Transmembrane regions (helical) follow at residues 1 to 21, 45 to 66, 81 to 101, and 146 to 166; these read FGLL…LLAA, WLIR…YLHI, WNIG…GYVX, and FFAL…VHLT. Residues His-51 and His-65 each contribute to the heme b site. Heme b-binding residues include His-150 and His-164. Residue His-169 coordinates a ubiquinone. 3 helical membrane-spanning segments follow: residues 194 to 214, 256 to 276, and 288 to 308; these read TKDV…ALFS, LGGV…PFLH, and LSQI…WVSN.

Belongs to the cytochrome b family. In terms of assembly, the cytochrome bc1 complex contains 11 subunits: 3 respiratory subunits (MT-CYB, CYC1 and UQCRFS1), 2 core proteins (UQCRC1 and UQCRC2) and 6 low-molecular weight proteins (UQCRH/QCR6, UQCRB/QCR7, UQCRQ/QCR8, UQCR10/QCR9, UQCR11/QCR10 and a cleavage product of UQCRFS1). This cytochrome bc1 complex then forms a dimer. The cofactor is heme b.

The protein resides in the mitochondrion inner membrane. In terms of biological role, component of the ubiquinol-cytochrome c reductase complex (complex III or cytochrome b-c1 complex) that is part of the mitochondrial respiratory chain. The b-c1 complex mediates electron transfer from ubiquinol to cytochrome c. Contributes to the generation of a proton gradient across the mitochondrial membrane that is then used for ATP synthesis. The protein is Cytochrome b (MT-CYB) of Pomatostomus ruficeps (Chestnut-crowned babbler).